We begin with the raw amino-acid sequence, 664 residues long: MSMSCKINWLMVLVIIALSNLESSLGRLVFEGSAGLMNGFTTLTNTKKHAYGQAFNDEPFPFKNSVNGNMTSFSFTFFFAIVPEHIDKGSHGIAFVISPTRGIPGASADQYLGIFNDTNDGNSSNHIIAVELDIHKDDEFGDIDDNHVGININGMRSIVSAPAGYYDQNGQFKNLSLISGNLLRVTILYSQEEKQLNVTLSPAEEANVPKWPLLSLNKDLSPYLSKNMYIGFTASTGSVGAIHYMWMWYVFTFIIVPKLDFDIPTFPPYPKAESQVKLIVLVTFLTLALFVALAASALIVFFYKRHKKLLEVLEEWEVECGPHRFSYKELFNATNGFKQLLGEGGFGPVFKGTLSGSNAKIAVKRVSHDSSQGMRELLAEISTIGRLRHPNLVRLLGYCRYKEELYLVYDFLPNGSLDKYLYGTSDQKQLSWSQRFKIIKDVASALSYLHHGWIHVVIHRDIKPANVLIDDKMNASLGDFGLAKVYDQGYDPQTSRVAGTFGYMAPEIMRTGRPTMGTDVYAFGMFMLEVSCDRKLFEPRAESEEAILTNWAINCWENGDIVEAATERIRQDNDKGQLELVLKLGVLCSHEAEEVRPDMATVVKILNGVSELPDNLLDIVRSEKLENWYERYSKVIDPVTTEESIGNLAITEPILPSGRPRLFL.

The N-terminal stretch at 1 to 26 (MSMSCKINWLMVLVIIALSNLESSLG) is a signal peptide. Topologically, residues 27-278 (RLVFEGSAGL…YPKAESQVKL (252 aa)) are extracellular. Residues 28 to 250 (LVFEGSAGLM…AIHYMWMWYV (223 aa)) form a legume-lectin like region. Asn69, Asn116, Asn122, Asn174, and Asn197 each carry an N-linked (GlcNAc...) asparagine glycan. The chain crosses the membrane as a helical span at residues 279 to 299 (IVLVTFLTLALFVALAASALI). At 300–664 (VFFYKRHKKL…LPSGRPRLFL (365 aa)) the chain is on the cytoplasmic side. The Protein kinase domain maps to 335–617 (NGFKQLLGEG…GVSELPDNLL (283 aa)). ATP is bound by residues 341 to 349 (LGEGGFGPV) and Lys364. Asp461 functions as the Proton acceptor in the catalytic mechanism.

The protein in the C-terminal section; belongs to the protein kinase superfamily. Ser/Thr protein kinase family. It in the N-terminal section; belongs to the leguminous lectin family.

The protein localises to the cell membrane. The catalysed reaction is L-seryl-[protein] + ATP = O-phospho-L-seryl-[protein] + ADP + H(+). The enzyme catalyses L-threonyl-[protein] + ATP = O-phospho-L-threonyl-[protein] + ADP + H(+). The protein is Probable L-type lectin-domain containing receptor kinase V.3 (LECRK53) of Arabidopsis thaliana (Mouse-ear cress).